We begin with the raw amino-acid sequence, 220 residues long: 14-3-3-like protein (220 aa).

It belongs to the 14-3-3 family.

In Spinacia oleracea (Spinach), this protein is 14-3-3-like protein.